We begin with the raw amino-acid sequence, 30 residues long: Ampulexin 3 (30 aa).

The first 17 residues, 1–17, serve as a signal peptide directing secretion; sequence MKAIMVLFYVMTLTIIG.

In terms of assembly, monomer. Expressed in venom sac and, to a lesser extent, in venom gland. Not expressed in brain.

Its subcellular location is the secreted. The protein is Ampulexin 3 of Ampulex compressa (Emerald cockroach wasp).